Reading from the N-terminus, the 387-residue chain is Muscleblind-like protein 1 (387 aa).

Thr6 is subject to Phosphothreonine. C3H1-type zinc fingers lie at residues 13–41 (WLTL…HPSK), 47–73 (NGRV…HPPP), 178–206 (TDRL…HPAD), and 214–240 (DNTV…HPPA).

The protein belongs to the muscleblind family. Interacts with DDX1 and YBX1. Interacts with HNRNPH1; the interaction in RNA-independent. Interacts with RBPMS; the interaction allows cooperative assembly of RNA-bound stable cell-specific alternative splicing regulatory complexes.

The protein resides in the nucleus. It is found in the cytoplasm. Its subcellular location is the cytoplasmic granule. Mediates pre-mRNA alternative splicing regulation. Acts either as activator or repressor of splicing on specific pre-mRNA targets. Inhibits cardiac troponin-T (TNNT2) pre-mRNA exon inclusion but induces insulin receptor (IR) pre-mRNA exon inclusion in muscle. Antagonizes the alternative splicing activity pattern of CELF proteins. Regulates the TNNT2 exon 5 skipping through competition with U2AF2. Inhibits the formation of the spliceosome A complex on intron 4 of TNNT2 pre-mRNA. Binds to the stem-loop structure within the polypyrimidine tract of TNNT2 intron 4 during spliceosome assembly. Binds to the 5'-YGCU(U/G)Y-3'consensus sequence. Binds to the IR RNA. Binds to expanded CUG repeat RNA, which folds into a hairpin structure containing GC base pairs and bulged, unpaired U residues. Together with RNA binding proteins RBPMS and RBFOX2, activates vascular smooth muscle cells alternative splicing events. Regulates NCOR2 alternative splicing. This chain is Muscleblind-like protein 1, found in Rattus norvegicus (Rat).